Reading from the N-terminus, the 243-residue chain is Orotidine 5'-phosphate decarboxylase (243 aa).

Substrate is bound by residues aspartate 16, lysine 38, 65–74 (DLKLHDIPNT), threonine 120, arginine 181, glutamine 190, glycine 210, and arginine 211. Residue lysine 67 is the Proton donor of the active site.

It belongs to the OMP decarboxylase family. Type 1 subfamily. As to quaternary structure, homodimer.

It catalyses the reaction orotidine 5'-phosphate + H(+) = UMP + CO2. Its pathway is pyrimidine metabolism; UMP biosynthesis via de novo pathway; UMP from orotate: step 2/2. In terms of biological role, catalyzes the decarboxylation of orotidine 5'-monophosphate (OMP) to uridine 5'-monophosphate (UMP). This chain is Orotidine 5'-phosphate decarboxylase, found in Bradyrhizobium sp. (strain ORS 278).